A 216-amino-acid chain; its full sequence is Potassium-transporting ATPase KdpC subunit (216 aa).

Residues 12-32 (LLGVSLLVFGLLYQGSLMAIG) traverse the membrane as a helical segment. Positions 197–207 (QNETDQNSDMN) are enriched in polar residues. The segment at 197–216 (QNETDQNSDMNASEIANGDH) is disordered.

This sequence belongs to the KdpC family. The system is composed of three essential subunits: KdpA, KdpB and KdpC. The complex also contains KdpF, a small non-essential subunit.

It is found in the cell membrane. Functionally, part of the high-affinity ATP-driven potassium transport (or Kdp) system, which catalyzes the hydrolysis of ATP coupled with the electrogenic transport of potassium into the cytoplasm. This subunit acts as a catalytic chaperone that increases the ATP-binding affinity of the ATP-hydrolyzing subunit KdpB by the formation of a transient KdpB/KdpC/ATP ternary complex. The Kdp system is essential for growth under K(+) limitation, and for survival under desiccation and salt crystal inclusion. The protein is Potassium-transporting ATPase KdpC subunit of Halobacterium salinarum (strain ATCC 29341 / DSM 671 / R1).